The chain runs to 417 residues: Putative F-box protein At3g58950 (417 aa).

Positions 1–53 constitute an F-box domain; sequence MDLFSSLPDEVLCHILSFLTTKEAALASVVSKRWRNQFALVPNLDIDEEGKRE.

The polypeptide is Putative F-box protein At3g58950 (Arabidopsis thaliana (Mouse-ear cress)).